Here is a 278-residue protein sequence, read N- to C-terminus: Large ribosomal subunit protein uL2 (278 aa).

The interval 222 to 278 (GVVMNPIDHPHGGGEGRTSGGRHPVTPWGKPTKGKKTRSNKSTDKFILISRHKRKKK) is disordered.

Belongs to the universal ribosomal protein uL2 family. Part of the 50S ribosomal subunit. Forms a bridge to the 30S subunit in the 70S ribosome.

In terms of biological role, one of the primary rRNA binding proteins. Required for association of the 30S and 50S subunits to form the 70S ribosome, for tRNA binding and peptide bond formation. It has been suggested to have peptidyltransferase activity; this is somewhat controversial. Makes several contacts with the 16S rRNA in the 70S ribosome. This Rhodopseudomonas palustris (strain BisB5) protein is Large ribosomal subunit protein uL2.